Reading from the N-terminus, the 96-residue chain is MSTIMKHTVGFIASIVLTLLAVYVTLYTSLTFHAKLTIIFGFAFVQAGLQLLMFMHLTEGKDGRLQTFKVIFALVITLCFVVGTYWVMQGGHSSHL.

3 consecutive transmembrane segments (helical) span residues 8–28 (TVGF…TLYT), 36–56 (LTII…MFMH), and 68–88 (FKVI…YWVM).

Belongs to the cytochrome c oxidase bacterial subunit 4 family.

Its subcellular location is the cell membrane. The catalysed reaction is 2 a quinol + O2 = 2 a quinone + 2 H2O. In terms of biological role, catalyzes quinol oxidation with the concomitant reduction of oxygen to water. The sequence is that of Probable quinol oxidase subunit 4 (qoxD) from Staphylococcus aureus (strain USA300).